A 193-amino-acid chain; its full sequence is Imidazoleglycerol-phosphate dehydratase (193 aa).

Belongs to the imidazoleglycerol-phosphate dehydratase family.

It is found in the cytoplasm. It carries out the reaction D-erythro-1-(imidazol-4-yl)glycerol 3-phosphate = 3-(imidazol-4-yl)-2-oxopropyl phosphate + H2O. It participates in amino-acid biosynthesis; L-histidine biosynthesis; L-histidine from 5-phospho-alpha-D-ribose 1-diphosphate: step 6/9. The protein is Imidazoleglycerol-phosphate dehydratase of Sulfolobus acidocaldarius (strain ATCC 33909 / DSM 639 / JCM 8929 / NBRC 15157 / NCIMB 11770).